The sequence spans 383 residues: NifS-like protein (383 aa).

Residues 58 to 59 and 184 to 186 contribute to the pyridoxal 5'-phosphate site; these read SE and SIN.

This sequence belongs to the class-V pyridoxal-phosphate-dependent aminotransferase family. NifS/IscS subfamily. The cofactor is pyridoxal 5'-phosphate.

It localises to the virion. In African swine fever virus (strain Badajoz 1971 Vero-adapted) (Ba71V), this protein is NifS-like protein.